A 260-amino-acid polypeptide reads, in one-letter code: Snake venom serine protease KN5 (260 aa).

A signal peptide spans 1-18 (MVLIRVLANLLILQLSYA). The propeptide occupies 19-24 (QKSSEL). The Peptidase S1 domain maps to 25–251 (VIGGDECNIN…HLDWIQSIIA (227 aa)). Intrachain disulfides connect Cys31-Cys165, Cys100-Cys258, Cys144-Cys212, Cys176-Cys191, and Cys202-Cys227. His67 acts as the Charge relay system in catalysis. N-linked (GlcNAc...) asparagine glycosylation occurs at Asn105. Asp112 functions as the Charge relay system in the catalytic mechanism. N-linked (GlcNAc...) asparagine glycosylation is found at Asn124 and Asn172. Residue Ser206 is the Charge relay system of the active site. Asn213 and Asn255 each carry an N-linked (GlcNAc...) asparagine glycan.

Belongs to the peptidase S1 family. Snake venom subfamily. In terms of assembly, monomer. In terms of tissue distribution, expressed by the venom gland.

It is found in the secreted. Functionally, snake venom serine protease that may act in the hemostasis system of the prey. This chain is Snake venom serine protease KN5, found in Trimeresurus stejnegeri (Chinese green tree viper).